The chain runs to 537 residues: Lysine--tRNA ligase (537 aa).

The 'HIGH' region motif lies at 30–38 (PSGNIHIGN). The short motif at 276-280 (AMSSS) is the 'KMSKS' region element.

It belongs to the class-I aminoacyl-tRNA synthetase family.

Its subcellular location is the cytoplasm. It carries out the reaction tRNA(Lys) + L-lysine + ATP = L-lysyl-tRNA(Lys) + AMP + diphosphate. The polypeptide is Lysine--tRNA ligase (Methanosarcina barkeri (strain Fusaro / DSM 804)).